The following is a 334-amino-acid chain: 5-formaminoimidazole-4-carboxamide-1-(beta)-D-ribofuranosyl 5'-monophosphate synthetase (334 aa).

The 5-amino-1-(5-phospho-beta-D-ribosyl)imidazole-4-carboxamide site is built by S10, H11, S71, and H75. The region spanning 78-325 (IELVENMKVP…IAMEIREAIE (248 aa)) is the ATP-grasp domain. Residues 132-142 (KPHGAKGGKGY), 173-176 (QEYV), and E204 contribute to the ATP site. N232 contacts 5-amino-1-(5-phospho-beta-D-ribosyl)imidazole-4-carboxamide. The Mg(2+) site is built by E270 and E283.

Belongs to the phosphohexose mutase family. As to quaternary structure, homotrimer and homohexamer. It depends on Mg(2+) as a cofactor. Mn(2+) is required as a cofactor.

The enzyme catalyses 5-amino-1-(5-phospho-beta-D-ribosyl)imidazole-4-carboxamide + formate + ATP = 5-formamido-1-(5-phospho-D-ribosyl)imidazole-4-carboxamide + ADP + phosphate. Its pathway is purine metabolism; IMP biosynthesis via de novo pathway; 5-formamido-1-(5-phospho-D-ribosyl)imidazole-4-carboxamide from 5-amino-1-(5-phospho-D-ribosyl)imidazole-4-carboxamide (formate route): step 1/1. In terms of biological role, catalyzes the ATP- and formate-dependent formylation of 5-aminoimidazole-4-carboxamide-1-beta-d-ribofuranosyl 5'-monophosphate (AICAR) to 5-formaminoimidazole-4-carboxamide-1-beta-d-ribofuranosyl 5'-monophosphate (FAICAR) in the absence of folates. This Pyrococcus furiosus (strain ATCC 43587 / DSM 3638 / JCM 8422 / Vc1) protein is 5-formaminoimidazole-4-carboxamide-1-(beta)-D-ribofuranosyl 5'-monophosphate synthetase.